Here is a 218-residue protein sequence, read N- to C-terminus: Probable GTP-binding protein EngB (218 aa).

Residues 31–205 (VGVEIAFAGR…LGILNEWCHP (175 aa)) form the EngB-type G domain. Residues 39–46 (GRSNAGKS), 66–70 (GRTQL), 84–87 (DLPG), 151–154 (TKCD), and 184–186 (FSS) contribute to the GTP site. Mg(2+)-binding residues include S46 and T68.

It belongs to the TRAFAC class TrmE-Era-EngA-EngB-Septin-like GTPase superfamily. EngB GTPase family. Mg(2+) serves as cofactor.

Functionally, necessary for normal cell division and for the maintenance of normal septation. The sequence is that of Probable GTP-binding protein EngB from Shewanella loihica (strain ATCC BAA-1088 / PV-4).